The following is a 230-amino-acid chain: Ureidoacrylate amidohydrolase RutB (230 aa).

Asp24 functions as the Proton acceptor in the catalytic mechanism. The active site involves Lys133. The active-site Nucleophile is Cys166.

The protein belongs to the isochorismatase family. RutB subfamily.

It carries out the reaction (Z)-3-ureidoacrylate + H2O + H(+) = (Z)-3-aminoacrylate + NH4(+) + CO2. The catalysed reaction is (Z)-3-ureidoacrylate + H2O = (Z)-3-aminoacrylate + carbamate + H(+). It catalyses the reaction (Z)-2-methylureidoacrylate + H2O + H(+) = (Z)-2-methylaminoacrylate + NH4(+) + CO2. Its function is as follows. Hydrolyzes ureidoacrylate to form aminoacrylate and carbamate. The carbamate hydrolyzes spontaneously, thereby releasing one of the nitrogen atoms of the pyrimidine ring as ammonia and one of its carbon atoms as CO2. The polypeptide is Ureidoacrylate amidohydrolase RutB (Escherichia coli O150:H5 (strain SE15)).